The sequence spans 155 residues: Nodulin-related protein 2 (155 aa).

At Met1 the chain carries N-acetylmethionine. Disordered stretches follow at residues 1–37 (MNFI…PATN) and 85–155 (DEKS…GFLK). Over residues 95 to 106 (DKAEKYLNDYES) the composition is skewed to basic and acidic residues. Over residues 120-130 (SQAEPASQPEP) the composition is skewed to low complexity.

In terms of assembly, interacts with DEK3.

May be a negative regulator of the ABA signaling/synthesis pathway. This is Nodulin-related protein 2 from Arabidopsis thaliana (Mouse-ear cress).